A 407-amino-acid chain; its full sequence is Imidazolonepropionase (407 aa).

Fe(3+) contacts are provided by histidine 74 and histidine 76. Histidine 74 and histidine 76 together coordinate Zn(2+). The 4-imidazolone-5-propanoate site is built by arginine 83, tyrosine 146, and histidine 179. Residue tyrosine 146 coordinates N-formimidoyl-L-glutamate. Histidine 244 contacts Fe(3+). Histidine 244 serves as a coordination point for Zn(2+). Glutamine 247 is a binding site for 4-imidazolone-5-propanoate. Aspartate 319 lines the Fe(3+) pocket. Aspartate 319 provides a ligand contact to Zn(2+). N-formimidoyl-L-glutamate-binding residues include asparagine 321 and glycine 323. 4-imidazolone-5-propanoate is bound at residue threonine 324.

This sequence belongs to the metallo-dependent hydrolases superfamily. HutI family. The cofactor is Zn(2+). Fe(3+) is required as a cofactor.

The protein localises to the cytoplasm. It catalyses the reaction 4-imidazolone-5-propanoate + H2O = N-formimidoyl-L-glutamate. The protein operates within amino-acid degradation; L-histidine degradation into L-glutamate; N-formimidoyl-L-glutamate from L-histidine: step 3/3. Functionally, catalyzes the hydrolytic cleavage of the carbon-nitrogen bond in imidazolone-5-propanoate to yield N-formimidoyl-L-glutamate. It is the third step in the universal histidine degradation pathway. In Salmonella arizonae (strain ATCC BAA-731 / CDC346-86 / RSK2980), this protein is Imidazolonepropionase.